The sequence spans 153 residues: Ribosome maturation factor RimP (153 aa).

The protein belongs to the RimP family.

It is found in the cytoplasm. Its function is as follows. Required for maturation of 30S ribosomal subunits. In Synechococcus elongatus (strain ATCC 33912 / PCC 7942 / FACHB-805) (Anacystis nidulans R2), this protein is Ribosome maturation factor RimP.